A 336-amino-acid chain; its full sequence is Atypical chemokine receptor 1 (336 aa).

Topologically, residues 1–63 (MGNCLHQAEL…CSLLNDSSLP (63 aa)) are extracellular. Residues asparagine 16, asparagine 27, asparagine 33, and asparagine 58 are each glycosylated (N-linked (GlcNAc...) asparagine). 2 cysteine pairs are disulfide-bonded: cysteine 51/cysteine 276 and cysteine 129/cysteine 195. A helical transmembrane segment spans residues 64–84 (FFILASDLGILASSTVLFMLF). The Cytoplasmic segment spans residues 85 to 95 (RPLFRWQLCPG). A helical membrane pass occupies residues 96–116 (WPVLAQLAVGSALFSIVVPIL). Residues 117–129 (APGLGNTHSSALC) lie on the Extracellular side of the membrane. The helical transmembrane segment at 130-153 (SLGYCVWYGSAFAQALLLGCHASL) threads the bilayer. Over 154–166 (GPKLGAGQVPGLT) the chain is Cytoplasmic. A helical membrane pass occupies residues 167 to 187 (LGLPVGLWGATALLTLPITLA). The Extracellular portion of the chain corresponds to 188 to 207 (SGASDGLCTPIYSTELEALQ). A helical membrane pass occupies residues 208–228 (ATHAVACFAIFVLLPLGLFGA). Over 229–244 (KGLKKALGMGPGPWMN) the chain is Cytoplasmic. A helical transmembrane segment spans residues 245–265 (ILWVWFIFWWPHGLVLGLDFL). Residues 266–287 (VGSKLSLLPTCLAQQVLDLLLN) lie on the Extracellular side of the membrane. The chain crosses the membrane as a helical span at residues 288–308 (LAEALAIVHCVATPLLLALFC). The Cytoplasmic portion of the chain corresponds to 309–336 (HQTTRTLLPSLPLPERWSSPVDTLGSKS).

Belongs to the G-protein coupled receptor 1 family. Atypical chemokine receptor subfamily.

It is found in the early endosome. The protein localises to the recycling endosome. The protein resides in the membrane. In terms of biological role, atypical chemokine receptor that controls chemokine levels and localization via high-affinity chemokine binding that is uncoupled from classic ligand-driven signal transduction cascades, resulting instead in chemokine sequestration, degradation, or transcytosis. Also known as interceptor (internalizing receptor) or chemokine-scavenging receptor or chemokine decoy receptor. Has a promiscuous chemokine-binding profile, interacting with inflammatory chemokines of both the CXC and the CC subfamilies but not with homeostatic chemokines. Acts as a receptor for chemokines including CCL2, CCL5, CCL7, CCL11, CCL13, CCL14, CCL17, CXCL5, CXCL6, IL8/CXCL8, CXCL11, GRO, RANTES, MCP-1 and TARC. May regulate chemokine bioavailability and, consequently, leukocyte recruitment through two distinct mechanisms: when expressed in endothelial cells, it sustains the abluminal to luminal transcytosis of tissue-derived chemokines and their subsequent presentation to circulating leukocytes; when expressed in erythrocytes, serves as blood reservoir of cognate chemokines but also as a chemokine sink, buffering potential surges in plasma chemokine levels. The polypeptide is Atypical chemokine receptor 1 (ACKR1) (Saimiri boliviensis boliviensis (Bolivian squirrel monkey)).